The sequence spans 98 residues: Citrate lyase acyl carrier protein (98 aa).

At S14 the chain carries O-(phosphoribosyl dephospho-coenzyme A)serine.

Belongs to the CitD family. As to quaternary structure, oligomer with a subunit composition of (alpha,beta,gamma)6.

It localises to the cytoplasm. Covalent carrier of the coenzyme of citrate lyase. This chain is Citrate lyase acyl carrier protein, found in Escherichia coli O81 (strain ED1a).